Consider the following 287-residue polypeptide: Large ribosomal subunit protein uL2 (287 aa).

Disordered stretches follow at residues 1–30 (MGIRNYRPYTPGTRQKSVSDFSEITHDQPE) and 211–287 (NRWK…GRQS). Residues 12–22 (GTRQKSVSDFS) are compositionally biased toward polar residues. 2 stretches are compositionally biased toward basic residues: residues 211–220 (NRWKGRRPKV) and 258–287 (KTRKKKKLSNALIVRRRRKSSKRGRGGRQS).

This sequence belongs to the universal ribosomal protein uL2 family. As to quaternary structure, part of the 50S ribosomal subunit. Forms a bridge to the 30S subunit in the 70S ribosome.

Its function is as follows. One of the primary rRNA binding proteins. Required for association of the 30S and 50S subunits to form the 70S ribosome, for tRNA binding and peptide bond formation. It has been suggested to have peptidyltransferase activity; this is somewhat controversial. Makes several contacts with the 16S rRNA in the 70S ribosome. This chain is Large ribosomal subunit protein uL2, found in Cyanothece sp. (strain PCC 7425 / ATCC 29141).